We begin with the raw amino-acid sequence, 182 residues long: Adenine phosphoribosyltransferase (182 aa).

This sequence belongs to the purine/pyrimidine phosphoribosyltransferase family. Homodimer.

Its subcellular location is the cytoplasm. It carries out the reaction AMP + diphosphate = 5-phospho-alpha-D-ribose 1-diphosphate + adenine. The protein operates within purine metabolism; AMP biosynthesis via salvage pathway; AMP from adenine: step 1/1. Its function is as follows. Catalyzes a salvage reaction resulting in the formation of AMP, that is energically less costly than de novo synthesis. This Streptomyces avermitilis (strain ATCC 31267 / DSM 46492 / JCM 5070 / NBRC 14893 / NCIMB 12804 / NRRL 8165 / MA-4680) protein is Adenine phosphoribosyltransferase.